The primary structure comprises 241 residues: DNA repair protein RecO (241 aa).

Belongs to the RecO family.

In terms of biological role, involved in DNA repair and RecF pathway recombination. The sequence is that of DNA repair protein RecO from Ruegeria sp. (strain TM1040) (Silicibacter sp.).